Consider the following 435-residue polypeptide: U-box domain-containing protein 21 (435 aa).

Positions 30-104 (TIPPEFQCPI…QGWCVEKGSP (75 aa)) constitute a U-box domain. ARM repeat units lie at residues 202–241 (LEGI…EILS), 245–285 (TRVH…QMVL), 288–327 (PEIA…AICE), and 329–369 (EHGR…KLWK).

It catalyses the reaction S-ubiquitinyl-[E2 ubiquitin-conjugating enzyme]-L-cysteine + [acceptor protein]-L-lysine = [E2 ubiquitin-conjugating enzyme]-L-cysteine + N(6)-ubiquitinyl-[acceptor protein]-L-lysine.. The protein operates within protein modification; protein ubiquitination. Functionally, functions as an E3 ubiquitin ligase. The sequence is that of U-box domain-containing protein 21 (PUB21) from Arabidopsis thaliana (Mouse-ear cress).